A 339-amino-acid polypeptide reads, in one-letter code: Glucokinase (339 aa).

16 to 21 (GDIGGT) is an ATP binding site.

The protein belongs to the bacterial glucokinase family.

The protein resides in the cytoplasm. It catalyses the reaction D-glucose + ATP = D-glucose 6-phosphate + ADP + H(+). This Rhizobium meliloti (strain 1021) (Ensifer meliloti) protein is Glucokinase.